Reading from the N-terminus, the 114-residue chain is Small ribosomal subunit protein uS15 (114 aa).

This sequence belongs to the universal ribosomal protein uS15 family.

This is Small ribosomal subunit protein uS15 (RpS13) from Musca domestica (House fly).